Consider the following 321-residue polypeptide: Olfactory receptor 5K3 (321 aa).

At 1-25 (MNKENHSLIAEFILTGFTYHPKLKT) the chain is on the extracellular side. N-linked (GlcNAc...) asparagine glycosylation occurs at Asn5. Residues 26 to 46 (VLFVVFFAIYLITMVGNIGLV) traverse the membrane as a helical segment. Over 47-56 (ALIYIEQRLH) the chain is Cytoplasmic. A helical membrane pass occupies residues 57–77 (TPMYIFLGNLVLMDSCCSSAI). Residues 78 to 97 (TPKMLENFFSEDKRITLYEC) lie on the Extracellular side of the membrane. Cys97 and Cys179 are disulfide-bonded. Residues 98-118 (MAQFYFLCLAETTDCFLLAAM) traverse the membrane as a helical segment. The Cytoplasmic portion of the chain corresponds to 119 to 143 (AYDCYVAICNPLQYHTMMSKTLCIQ). Residues 144-164 (MTAGAYLAGNLHPMIEVEFLL) traverse the membrane as a helical segment. Residues 165 to 196 (RLTFCGSHQINHFFCDVLPLYRLSCINPYINE) lie on the Extracellular side of the membrane. A helical transmembrane segment spans residues 197–217 (LVLFILAGSIQIFTIVLVSYF). The Cytoplasmic segment spans residues 218-235 (YILFTIFTMKSKEGRGKA). A helical membrane pass occupies residues 236-256 (LSTCASHFLSVSIFCDSLLFM). Over 257–269 (YARPGAVNEGDKD) the chain is Extracellular. A helical transmembrane segment spans residues 270 to 290 (IPVAIFYTLVIPLLNPFIYSL). Residues 291-321 (RNKEVINIMKKIMKKRKFCHILKQMSSPLAT) lie on the Cytoplasmic side of the membrane.

This sequence belongs to the G-protein coupled receptor 1 family.

It localises to the cell membrane. In terms of biological role, odorant receptor. This chain is Olfactory receptor 5K3 (OR5K3), found in Homo sapiens (Human).